Reading from the N-terminus, the 213-residue chain is HTH-type transcriptional regulator SrpR (213 aa).

The 61-residue stretch at 10–70 (EETRQRIIDA…AVLASRQHPL (61 aa)) folds into the HTH tetR-type domain. The H-T-H motif DNA-binding region spans 33-52 (TLDQIARKAGVTRGAVYWHF).

Its function is as follows. In conjunction with SrpS represses the srpABC operon. The polypeptide is HTH-type transcriptional regulator SrpR (srpR) (Pseudomonas putida (Arthrobacter siderocapsulatus)).